A 965-amino-acid chain; its full sequence is Probable ion channel POLLUX (965 aa).

Positions 1–11 (MAESDGGEASP) are enriched in low complexity. 2 disordered regions span residues 1-76 (MAES…APRG) and 108-158 (GPHA…KSLA). Residues 32–42 (LTKSRTISGSA) show a composition bias toward polar residues. Composition is skewed to low complexity over residues 52–66 (SNSSSSILVRRSSTA) and 118–149 (RSQQQTPTTTAAAAADSRSPTPAAPPQTASVS). Transmembrane regions (helical) follow at residues 187 to 207 (LSPYLVLMLVVTVISFSLAIW), 251 to 271 (ADWNLASCSRMLVFAIPVFLV), 317 to 337 (LALLLATIILIASGGIALYVV), and 369 to 389 (IVSVSISSGGMLVFATMLGLV). RCK N-terminal domains lie at 410–551 (VNHI…ETVV) and 670–818 (PEKI…DKSI).

This sequence belongs to the castor/pollux (TC 1.A.1.23) family. In terms of tissue distribution, expressed in roots, leaves, stems and panicles.

The protein resides in the nucleus membrane. Required for mycorrhizal symbiosis. The protein is Probable ion channel POLLUX of Oryza sativa subsp. japonica (Rice).